The primary structure comprises 219 residues: Glutathione S-transferase F13 (219 aa).

One can recognise a GST N-terminal domain in the interval 2–82 (AMKLYGDEMS…YIAEKHRDKG (81 aa)). Residues 11 to 12 (SA), 40 to 41 (HK), 53 to 54 (KV), and 66 to 67 (ES) contribute to the glutathione site. A GST C-terminal domain is found at 90-217 (DPKEAAIVKL…VSPGLTVAPT (128 aa)).

The protein belongs to the GST superfamily. Phi family.

Its subcellular location is the cytoplasm. The protein resides in the cytosol. It catalyses the reaction RX + glutathione = an S-substituted glutathione + a halide anion + H(+). Functionally, may be involved in the conjugation of reduced glutathione to a wide number of exogenous and endogenous hydrophobic electrophiles and have a detoxification role against certain herbicides. The sequence is that of Glutathione S-transferase F13 (GSTF13) from Arabidopsis thaliana (Mouse-ear cress).